Consider the following 224-residue polypeptide: Twisted gastrulation protein homolog 1 (224 aa).

The N-terminal stretch at 1–26 (MRSPCAALSASLLLLLLLLWARSSVG) is a signal peptide. Asparagine 53, asparagine 82, and asparagine 148 each carry an N-linked (GlcNAc...) asparagine glycan.

It belongs to the twisted gastrulation protein family. Interacts with CHRD and BMP4. This interaction enhances CHRD/BMP4 complex formation. Interacts with BMP7.

Its subcellular location is the secreted. In terms of biological role, may be involved in dorsoventral axis formation. Seems to antagonize BMP signaling by forming ternary complexes with CHRD and BMPs, thereby preventing BMPs from binding to their receptors. In addition to the anti-BMP function, also has pro-BMP activity, partly mediated by cleavage and degradation of CHRD, which releases BMPs from ternary complexes. May be an important modulator of BMP-regulated cartilage development and chondrocyte differentiation. May play a role in thymocyte development. This chain is Twisted gastrulation protein homolog 1 (TWSG1), found in Gallus gallus (Chicken).